The primary structure comprises 347 residues: MNPLALSLILTTLFTGTLITMMSSHWLTAWMGLEMNMLTMIPILMKTTNPRSTEAATKYFMTQATASMMLMMALTINLMYSGQWSITKMTNPVASNVALMALMTKLGSAPFHFWVPEVTQGVELTPGMILLTWQKLAPLSLLYQMATYTNTNLIYLSGLLSILIGGWGGLNQTQLRKILAYSSISHMGWMLIILPFNPTLTLLNLAIYILLTLSIFMILANTFTTSMSSLTLMWNKTPAMTIMLMTTLLSLGGLPPLSGFTPKWLMIHELTKNNSIIMPLTMAIMTLLNMYFYTRLIYYSSLTILPSTNNMKMTWQFTNTKHTMMLPTLITLSNMLLPLTPMISMLE.

The next 9 helical transmembrane spans lie at 3 to 23, 59 to 79, 93 to 115, 150 to 170, 178 to 198, 200 to 220, 240 to 260, 274 to 294, and 326 to 346; these read PLAL…TMMS, YFMT…INLM, VASN…HFWV, NTNL…WGGL, ILAY…PFNP, LTLL…MILA, MTIM…LSGF, NSII…YFYT, and LPTL…ISML.

The protein belongs to the complex I subunit 2 family. In terms of assembly, core subunit of respiratory chain NADH dehydrogenase (Complex I) which is composed of 45 different subunits. Interacts with TMEM242.

The protein resides in the mitochondrion inner membrane. It catalyses the reaction a ubiquinone + NADH + 5 H(+)(in) = a ubiquinol + NAD(+) + 4 H(+)(out). Its function is as follows. Core subunit of the mitochondrial membrane respiratory chain NADH dehydrogenase (Complex I) which catalyzes electron transfer from NADH through the respiratory chain, using ubiquinone as an electron acceptor. Essential for the catalytic activity and assembly of complex I. This Elephas maximus (Indian elephant) protein is NADH-ubiquinone oxidoreductase chain 2.